Here is a 538-residue protein sequence, read N- to C-terminus: Syncytin-2 (538 aa).

The signal sequence occupies residues 1–15; sequence MGLLLLLLILTPLLA. The Extracellular portion of the chain corresponds to 16–478; it reads AYCHPDFRLL…GWLNWEGTWK (463 aa). The short motif at 43-46 is the CXXC element; the sequence is CWLC. 3 disulfide bridges follow: Cys-43–Cys-46, Cys-43–Cys-439, and Cys-431–Cys-438. 7 N-linked (GlcNAc...) asparagine glycosylation sites follow: Asn-146, Asn-177, Asn-220, Asn-241, Asn-247, Asn-312, and Asn-332. Residues 354–374 form a fusion peptide region; the sequence is LIPLLVGLGIVGSAGTGIAGI. Residues 414–430 carry the CKS-17 motif; that stretch reads LQNRRGLDMLTAAQGGI. The CX6CC signature appears at 431-439; it reads CLALDEKCC. N-linked (GlcNAc...) asparagine glycosylation occurs at Asn-443. The chain crosses the membrane as a helical span at residues 479–499; the sequence is WFSWVLPFTGPLVSLLLLLLF. Over 500–538 the chain is Cytoplasmic; that stretch reads GPCLLNLITQFVSSRLQATKLQMKLNKRVHPRNSQESPF.

Belongs to the gamma type-C retroviral envelope protein family. HERV class-I FRD env subfamily. As to quaternary structure, the surface and transmembrane proteins form a heterodimer. They are attached by non-covalent interactions or by a labile interchain disulfide bond. Specific enzymatic cleavages in vivo yield the mature SU and TM proteins. In terms of processing, the CXXC motif is highly conserved across a broad range of retroviral envelope proteins. It is thought to participate in the formation of a labile disulfide bond possibly with the CX6CC motif present in the transmembrane protein.

The protein resides in the virion. Its subcellular location is the cell membrane. In terms of biological role, this endogenous retroviral envelope protein has retained its original fusogenic properties and participates in trophoblast fusion and the formation of a syncytium during placenta morphogenesis. The interaction with MFSD2A is apparently important for this process. Its function is as follows. Endogenous envelope proteins may have kept, lost or modified their original function during evolution but this one can still make pseudotypes with MLV, HIV-1 or SIV-1 virions and confer infectivity. Retroviral envelope proteins mediate receptor recognition and membrane fusion during early infection. The surface protein mediates receptor recognition, while the transmembrane protein anchors the envelope heterodimer to the viral membrane through one transmembrane domain. The other hydrophobic domain, called fusion peptide, mediates fusion of the viral membrane with the target cell membrane. This is Syncytin-2 (ERVFRD-1) from Callithrix jacchus (White-tufted-ear marmoset).